The chain runs to 507 residues: Zinc finger CCCH-type with G patch domain-containing protein (507 aa).

Met-1 is modified (N-acetylmethionine). The interval 88–125 (PVDPGNDSKTVPGSEVQPTPTSSALEEEEEDPDLEDLS) is disordered. Residues 94 to 111 (DSKTVPGSEVQPTPTSSA) show a composition bias toward polar residues. Over residues 112–123 (LEEEEEDPDLED) the composition is skewed to acidic residues. The C3H1-type zinc finger occupies 170–196 (KSLKPCPFFLEGKCRFKENCRFSHGQL). Residues 264–283 (LRTEATDSSDSDTGDASDSS) form a disordered region. Ser-272 bears the Phosphoserine mark. Residue Thr-276 is modified to Phosphothreonine. The G-patch domain occupies 309–355 (TRGIGSKLLVKMGYEFGKGLGRHAEGRVEPIHAVVLPRGKSLDQCAE). At Ser-349 the chain carries Phosphoserine. 2 disordered regions span residues 359 to 389 (KKTKQGQTGASRPPRCRRRSSRPEGRPPPRN) and 486 to 507 (AQEADLQRKQRKADTHRKMTEF). Residues 487–507 (QEADLQRKQRKADTHRKMTEF) are compositionally biased toward basic and acidic residues.

Interacts with CHD4/Mi-2; the interaction is direct.

Its subcellular location is the nucleus. Its function is as follows. Transcription repressor that specifically binds the 5'-GGAG[GA]A[GA]A-3' consensus sequence. Represses transcription by recruiting the chromatin multiprotein complex NuRD to target promoters. Negatively regulates expression of EGFR, a gene involved in cell proliferation, survival and migration. Its ability to repress genes of the EGFR pathway suggest it may act as a tumor suppressor. The polypeptide is Zinc finger CCCH-type with G patch domain-containing protein (Zgpat) (Rattus norvegicus (Rat)).